The following is a 263-amino-acid chain: (R)-S-adenosyl-L-methionine hydrolase (263 aa).

Residues Asp18, Asp82, and Asn181 each contribute to the adenosine site. (R)-S-adenosyl-L-methionine-binding residues include Asn181, Tyr221, Ser234, Glu239, and Met244.

Belongs to the SAM hydrolase / SAM-dependent halogenase family. Homotrimer.

The enzyme catalyses (R)-S-adenosyl-L-methionine + H2O = adenosine + L-methionine + H(+). Functionally, catalyzes the hydrolysis of S-adenosyl-L-methionine (SAM) into adenosine and L-methionine. Does not have chlorinase or fluorinase activity. The sequence is that of (R)-S-adenosyl-L-methionine hydrolase from Methanocaldococcus jannaschii (strain ATCC 43067 / DSM 2661 / JAL-1 / JCM 10045 / NBRC 100440) (Methanococcus jannaschii).